We begin with the raw amino-acid sequence, 356 residues long: MKKLINDVQDVLDEQLAGLAKAHPSLTLHQDPVYVTRADAPVAGKVALLSGGGSGHEPMHCGYIGQGMLSGACPGEIFTSPTPDKIFECAMQVDGGEGVLLIIKNYTGDILNFETATELLHDSGVKVTTVVIDDDVAVKDSLYTAGRRGVANTVLIEKLVGAAAERGDSLDACAELGRKLNNQGHSIGIALGACTVPAAGKPSFTLADNEMEFGVGIHGEPGIDRRPFSSLDQTVDEMFDTLLVNGSYHRTLRFWDYQQGSWQEEQQTKQPLQSGDRVIALVNNLGATPLSELYGVYNRLTTRCQQAGLTIERNLIGAYCTSLDMTGFSITLLKVDDETLALWDAPVHTPALNWGK.

Positions 7-352 (DVQDVLDEQL…WDAPVHTPAL (346 aa)) constitute a DhaK domain. Residues 53 to 56 (GSGH), K104, and D109 each bind dihydroxyacetone. The active-site Proton acceptor is the H56. H218 functions as the Tele-hemiaminal-histidine intermediate in the catalytic mechanism.

As to quaternary structure, homodimer. The dihydroxyacetone kinase complex is composed of a homodimer of DhaM, a homodimer of DhaK and the subunit DhaL. DhaL also forms a complex with DhaR.

The catalysed reaction is dihydroxyacetone + phosphoenolpyruvate = dihydroxyacetone phosphate + pyruvate. The protein operates within polyol metabolism; glycerol degradation. Its activity is regulated as follows. Inhibited by chloro-3-hydroxyacetone and D,L-glyceraldehyde. Dihydroxyacetone binding subunit of the dihydroxyacetone kinase, which is responsible for the phosphoenolpyruvate (PEP)-dependent phosphorylation of dihydroxyacetone via a phosphoryl group transfer from DhaL-ATP. Binds covalently dihydroxyacetone in hemiaminal linkage. DhaK also acts as corepressor of the transcription activator DhaR by binding to the sensor domain of DhaR. In the presence of dihydroxyacetone, DhaL-ADP displaces DhaK and stimulates DhaR activity. In the absence of dihydroxyacetone, DhaL-ADP is converted by the PTS to DhaL-ATP, which does not bind to DhaR. The chain is PEP-dependent dihydroxyacetone kinase, dihydroxyacetone-binding subunit DhaK from Escherichia coli (strain K12).